A 297-amino-acid polypeptide reads, in one-letter code: MTSASPSPLRAANAASSAPVPPPAMKPSAPPVNILPTQLARTYSFVHPAALLAILATRFQALVADPVAEMLNTLPFLALLQVTYVMVCLPPAGSVLPSPPASPVSDGDEKEKEKEKEKEKEKEKRKLPLRAGKLPRKKNQTHAAGLSAKLTPALLSLILTFLLATPVLSLLLVLFGAPLTTHNAETVLCAAHMALLASTALIYVHGVDGAVWREVWAFARPADAVWGGALGTALGAWFGAVPIPLDWDRPWQAFPITILTGAYFGFAVGSVVCRSSWLFGKWLEFTPEQDDRDKKTE.

Low complexity predominate over residues 1 to 18; sequence MTSASPSPLRAANAASSA. The tract at residues 1–26 is disordered; that stretch reads MTSASPSPLRAANAASSAPVPPPAMK. The next 2 membrane-spanning stretches (helical) occupy residues 44–64 and 76–96; these read SFVH…ALVA and FLAL…GSVL. Positions 97-140 are disordered; sequence PSPPASPVSDGDEKEKEKEKEKEKEKEKRKLPLRAGKLPRKKNQ. Basic and acidic residues predominate over residues 107-126; that stretch reads GDEKEKEKEKEKEKEKEKRK. Residues 127–140 show a composition bias toward basic residues; it reads LPLRAGKLPRKKNQ. N139 carries N-linked (GlcNAc...) asparagine glycosylation. Transmembrane regions (helical) follow at residues 157–177, 187–207, 225–245, and 253–273; these read LILT…LFGA, VLCA…VHGV, VWGG…PIPL, and AFPI…SVVC.

It belongs to the PIGF family.

The protein localises to the endoplasmic reticulum membrane. The protein operates within glycolipid biosynthesis; glycosylphosphatidylinositol-anchor biosynthesis. In terms of biological role, acts in the GPI biosynthetic pathway between GlcNAc-PI synthesis and GPI transfer to protein. This Aspergillus fumigatus (strain ATCC MYA-4609 / CBS 101355 / FGSC A1100 / Af293) (Neosartorya fumigata) protein is Glycosylphosphatidylinositol anchor biosynthesis protein 11 (gpi11).